The chain runs to 316 residues: Ribose-phosphate pyrophosphokinase (316 aa).

Residues 41 to 43 (DGE) and 100 to 101 (RQ) contribute to the ATP site. Residues H134 and D175 each contribute to the Mg(2+) site. K198 is a catalytic residue. Residues R200, D224, and 228-232 (DTARS) each bind D-ribose 5-phosphate.

This sequence belongs to the ribose-phosphate pyrophosphokinase family. Class I subfamily. Homohexamer. Mg(2+) is required as a cofactor.

It localises to the cytoplasm. The catalysed reaction is D-ribose 5-phosphate + ATP = 5-phospho-alpha-D-ribose 1-diphosphate + AMP + H(+). The protein operates within metabolic intermediate biosynthesis; 5-phospho-alpha-D-ribose 1-diphosphate biosynthesis; 5-phospho-alpha-D-ribose 1-diphosphate from D-ribose 5-phosphate (route I): step 1/1. Its function is as follows. Involved in the biosynthesis of the central metabolite phospho-alpha-D-ribosyl-1-pyrophosphate (PRPP) via the transfer of pyrophosphoryl group from ATP to 1-hydroxyl of ribose-5-phosphate (Rib-5-P). The chain is Ribose-phosphate pyrophosphokinase from Thermosipho africanus (strain TCF52B).